We begin with the raw amino-acid sequence, 110 residues long: B3 domain-containing protein LOC_Os02g10420 (110 aa).

The segment at residues 1–104 (MSAMLNENVP…VLSVTVHKAD (104 aa)) is a DNA-binding region (TF-B3).

The protein resides in the nucleus. This chain is B3 domain-containing protein LOC_Os02g10420, found in Oryza sativa subsp. japonica (Rice).